A 90-amino-acid polypeptide reads, in one-letter code: Small ribosomal subunit protein bS18 (90 aa).

Belongs to the bacterial ribosomal protein bS18 family. As to quaternary structure, part of the 30S ribosomal subunit. Forms a tight heterodimer with protein bS6.

In terms of biological role, binds as a heterodimer with protein bS6 to the central domain of the 16S rRNA, where it helps stabilize the platform of the 30S subunit. This is Small ribosomal subunit protein bS18 from Polynucleobacter asymbioticus (strain DSM 18221 / CIP 109841 / QLW-P1DMWA-1) (Polynucleobacter necessarius subsp. asymbioticus).